Reading from the N-terminus, the 764-residue chain is DNA-binding protein SATB1 (764 aa).

Basic and acidic residues predominate over residues 1–15; it reads MDHLNEATQGKEHSE. The interval 1–56 is disordered; that stretch reads MDHLNEATQGKEHSEMSNNVSDPKGPPAKIARLEQNGSPLGRGRLGSTGGKMQGVP. The short motif at 20-40 is the Nuclear localization signal element; sequence VSDPKGPPAKIARLEQNGSPL. Gly residues predominate over residues 43-52; that stretch reads GRLGSTGGKM. K51 participates in a covalent cross-link: Glycyl lysine isopeptide (Lys-Gly) (interchain with G-Cter in SUMO2). One can recognise a CMP domain in the interval 71–172; the sequence is GTMLPVFCVV…VVTLKIQLHS (102 aa). N6-acetyllysine is present on K136. The Protein interaction motif lies at 139 to 143; sequence PVPLS. A CUTL domain is found at 175-248; sequence KLEDLPPEQW…WYKHFKKTKD (74 aa). A Phosphoserine modification is found at S185. The interval 224–278 is nuclear matrix targeting sequence (NMTS); sequence YYANVSAAKCQEFGRWYKHFKKTKDMMVEMDSLSELSQQGANHVNFGQQPVPGNT. The Nuclear matrix targeting sequence (NMTS) signature appears at 224–278; that stretch reads YYANVSAAKCQEFGRWYKHFKKTKDMMVEMDSLSELSQQGANHVNFGQQPVPGNT. Positions 266 to 296 are enriched in polar residues; sequence HVNFGQQPVPGNTAEQPPSPAQLSHGSQPSV. Residues 266 to 307 form a disordered region; that stretch reads HVNFGQQPVPGNTAEQPPSPAQLSHGSQPSVRTPLPNLHPGL. Positions 361 to 448 form a DNA-binding region, CUT 1; that stretch reads LEQQVSTNTE…ERDRIYQDER (88 aa). DNA contacts are provided by residues Q390, 400–410, and N425; that span reads RTQGLLSEILR. Residues 450 to 474 form a disordered region; sequence RSLNAASAMGPAPLLSTPPSRPPQV. Positions 484-571 form a DNA-binding region, CUT 2; that stretch reads NGKPENNTMN…ERDAIYEQES (88 aa). The tract at residues 591–650 is disordered; sequence QIQQQQQQQQQQQQQQQPPPPPPQPQPQPQAGPRLPPRQPTVASSAESDEENRQKTRPRT. Positions 593–606 are enriched in low complexity; it reads QQQQQQQQQQQQQQ. Residues 607–629 show a composition bias toward pro residues; the sequence is QPPPPPPQPQPQPQAGPRLPPRQ. S638 carries the phosphoserine modification. The homeobox DNA-binding region spans 646–705; that stretch reads TRPRTKISVEALGILQSFIQDVGLYPDEEAIQTLSAQLDLPKYTIIKFFQNQRYYLKHHG. Residue K745 forms a Glycyl lysine isopeptide (Lys-Gly) (interchain with G-Cter in SUMO) linkage.

It belongs to the CUT homeobox family. Interacts with PCAF. Interacts with sumoylated PML and HDAC1 Tat via the CMP domain. Also interacts with DYNLT3 and POLR2J2. Binds to EP300. Homodimer. Part of the nuclear protein complex gamma-globin promoter and enhancer binding factor (gamma-PE) composed at least of SATB1 and HOXB2. Interaction with CtBP1 when not acetylated stabilizes attachment to DNA and promotes transcription repression. Interacts with CUX1 (via DNA-binding domains); the interaction inhibits the attachment of both proteins to DNA. Sumoylated. Sumoylation promotes cleavage by caspases. In terms of processing, phosphorylated by PKC. Acetylated by PCAF. Phosphorylated form interacts with HDAC1, but unphosphorylated form interacts with PCAF. DNA binding properties are activated by phosphorylation and inactivated by acetylation. In opposition, gene expression is down-regulated by phosphorylation but up-regulated by acetylation. Post-translationally, cleaved at Asp-254 by caspase-3 and caspase-6 during T-cell apoptosis in thymus and during B-cell stimulation. The cleaved forms cannot dimerize and lose transcription regulation function because of impaired DNA and chromatin association. Expressed in the subventricular zone, rostral migratory stream and in the olfactory bulb (at protein level). Mainly expressed in thymus, spleen, and lymph nodes with a lower level observed in the brain.

Its subcellular location is the nucleus. The protein resides in the PML body. In terms of biological role, required for the switching of fetal globin species, and beta- and gamma-globin genes regulation during erythroid differentiation. Plays a role in chromatin organization and nuclear architecture during apoptosis. Crucial silencing factor contributing to the initiation of X inactivation mediated by Xist RNA that occurs during embryogenesis and in lymphoma. Binds to DNA at special AT-rich sequences, the consensus SATB1-binding sequence (CSBS), at nuclear matrix- or scaffold-associated regions. Thought to recognize the sugar-phosphate structure of double-stranded DNA. Transcriptional repressor controlling nuclear and viral gene expression in a phosphorylated and acetylated status-dependent manner, by binding to matrix attachment regions (MARs) of DNA and inducing a local chromatin-loop remodeling. Acts as a docking site for several chromatin remodeling enzymes and also by recruiting corepressors (HDACs) or coactivators (HATs) directly to promoters and enhancers. Modulates genes that are essential in the maturation of the immune T-cell CD8SP from thymocytes. Promotes neuronal differentiation of neural stem/progenitor cells in the adult subventricular zone, possibly by positively regulating the expression of NEUROD1. This Mus musculus (Mouse) protein is DNA-binding protein SATB1 (Satb1).